We begin with the raw amino-acid sequence, 404 residues long: MAQQGKVEPQDQDSFLDDQPGIRPIPSFDDMPLHQNLLRGIYSHGFEKPSSIQQRAIVPFTRGGDIIAQAQSGTGKTGAFSIGLLQRLDFRHNVLQGLVLSPTRELAMQTAEVITRIGEFLAEGSSSFCATFVGGTRVQDDYRKLQSGTIVAVGTPGRVVDVTKRGAMRTESLRVLVLDEADEMLSQGFAEQIYDIFRFLPKEIQVALFSATMPDDVLELTKKFMRDPTRILVKRESLTLEGIKQFFIAVEEEHKLDTLMDLYETVSIAQSVIFANTRRKVDWLASQLNSSNHTVSCMHSEMSKQEREKVMGTFRNGSSRVLVTTDLVARGIDVHHVNIVINFDLPTNKENYLHRIGRGGRYGRKGVAINFVTQKDVEVLREIESHYHTQIEELPVDFAAYLGE.

The tract at residues 1-28 is disordered; sequence MAQQGKVEPQDQDSFLDDQPGIRPIPSF. Positions 26 to 54 match the Q motif motif; the sequence is PSFDDMPLHQNLLRGIYSHGFEKPSSIQQ. One can recognise a Helicase ATP-binding domain in the interval 57-231; it reads IVPFTRGGDI…KKFMRDPTRI (175 aa). 70–77 is a binding site for ATP; sequence AQSGTGKT. The DEAD box motif lies at 179-182; sequence DEAD. A Helicase C-terminal domain is found at 242–402; the sequence is GIKQFFIAVE…ELPVDFAAYL (161 aa).

This sequence belongs to the DEAD box helicase family. eIF4A subfamily. EIF4F is a multi-subunit complex, the composition of which varies with external and internal environmental conditions. It is composed of at least EIF4A, EIF4E and EIF4G.

It catalyses the reaction ATP + H2O = ADP + phosphate + H(+). In terms of biological role, ATP-dependent RNA helicase which is a subunit of the eIF4F complex involved in cap recognition and is required for mRNA binding to ribosome. In the current model of translation initiation, eIF4A unwinds RNA secondary structures in the 5'-UTR of mRNAs which is necessary to allow efficient binding of the small ribosomal subunit, and subsequent scanning for the initiator codon. The polypeptide is Probable eukaryotic initiation factor 4A (Trypanosoma brucei brucei (strain 927/4 GUTat10.1)).